Consider the following 125-residue polypeptide: uncharacterized protein (125 aa).

This is an uncharacterized protein from Escherichia coli (Bacteriophage T4).